Here is a 95-residue protein sequence, read N- to C-terminus: Small ribosomal subunit protein bS6 (95 aa).

This sequence belongs to the bacterial ribosomal protein bS6 family.

Its function is as follows. Binds together with bS18 to 16S ribosomal RNA. This Rhodococcus jostii (strain RHA1) protein is Small ribosomal subunit protein bS6.